The chain runs to 214 residues: ER lumen protein-retaining receptor 3 (214 aa).

Residues 1-4 (MNVF) are Lumenal-facing. Residues 5–24 (RISGDVSHLLAIIILLLKMW) form a helical membrane-spanning segment. The Cytoplasmic portion of the chain corresponds to 25–32 (KSKSCAGI). A helical membrane pass occupies residues 33-52 (SGKSQLLFALVFTTRYLDLF). The interval 47 to 48 (RY) is interaction with the K-D-E-L motif on target proteins. Over 53–58 (TVFISA) the chain is Lumenal. The helical transmembrane segment at 59 to 79 (YNTVMKIVFLVCAYVTVYLIY) threads the bilayer. The Cytoplasmic portion of the chain corresponds to 80–92 (GKFRKAYDSENDT). Residues 93–110 (FRLEFLLVPVIGLSFLEN) traverse the membrane as a helical segment. Over 111-116 (YEFTPL) the chain is Lumenal. Residues 117 to 135 (EILWTFSIYLESVAILPQL) form a helical membrane-spanning segment. At 136–149 (FMISKTGEAESITT) the chain is on the cytoplasmic side. The helical transmembrane segment at 150–168 (HYLFFLGLYRVLYLANWIW) threads the bilayer. Residues 159-169 (RVLYLANWIWR) form an interaction with the K-D-E-L motif on target proteins region. Residues 169–178 (RYHTEKFYDQ) lie on the Lumenal side of the membrane. A helical membrane pass occupies residues 179 to 199 (IAVVSGVVQTIFYFDFFYLYI). The Cytoplasmic portion of the chain corresponds to 200–214 (TKVLKGKKLSLPMPV). The interval 204 to 207 (KGKK) is important for recycling of cargo proteins with the sequence motif K-D-E-L from the Golgi to the endoplasmic reticulum.

The protein belongs to the ERD2 family.

The protein localises to the endoplasmic reticulum membrane. It is found in the golgi apparatus membrane. It localises to the cytoplasmic vesicle. Its subcellular location is the COPI-coated vesicle membrane. In terms of biological role, receptor for the C-terminal sequence motif K-D-E-L that is present on endoplasmic reticulum resident proteins and that mediates their recycling from the Golgi back to the endoplasmic reticulum. The polypeptide is ER lumen protein-retaining receptor 3 (kdelr3) (Xenopus tropicalis (Western clawed frog)).